A 673-amino-acid polypeptide reads, in one-letter code: ATP-dependent zinc metalloprotease FtsH (673 aa).

Residues Met-1 to Asn-7 lie on the Cytoplasmic side of the membrane. The helical transmembrane segment at Leu-8 to Pro-28 threads the bilayer. Over Gln-29–Met-100 the chain is Periplasmic. A helical transmembrane segment spans residues Leu-101–Phe-121. Topologically, residues Met-122–Arg-673 are cytoplasmic. Gly-194–Thr-201 contacts ATP. His-416 lines the Zn(2+) pocket. Residue Glu-417 is part of the active site. 2 residues coordinate Zn(2+): His-420 and Asp-492. The tract at residues Ala-601 to Arg-673 is disordered. Over residues Ser-648–Val-660 the composition is skewed to polar residues. Basic and acidic residues predominate over residues Val-661 to Arg-673.

It in the central section; belongs to the AAA ATPase family. In the C-terminal section; belongs to the peptidase M41 family. As to quaternary structure, homohexamer. The cofactor is Zn(2+).

It localises to the cell inner membrane. In terms of biological role, acts as a processive, ATP-dependent zinc metallopeptidase for both cytoplasmic and membrane proteins. Plays a role in the quality control of integral membrane proteins. The polypeptide is ATP-dependent zinc metalloprotease FtsH (Magnetococcus marinus (strain ATCC BAA-1437 / JCM 17883 / MC-1)).